The following is a 149-amino-acid chain: Cytochrome c-type biogenesis protein CcmE (149 aa).

Residues 1-7 (MTRKQKR) are Cytoplasmic-facing. Residues 8-28 (LAVIAGGMGFIATAVLLVLFA) traverse the membrane as a helical; Signal-anchor for type II membrane protein segment. The Periplasmic segment spans residues 29–149 (FSQSVAYFYM…GVWKGEEASQ (121 aa)). Heme is bound by residues His123 and Tyr127.

It belongs to the CcmE/CycJ family.

It is found in the cell inner membrane. Functionally, heme chaperone required for the biogenesis of c-type cytochromes. Transiently binds heme delivered by CcmC and transfers the heme to apo-cytochromes in a process facilitated by CcmF and CcmH. This Rhizobium rhizogenes (strain K84 / ATCC BAA-868) (Agrobacterium radiobacter) protein is Cytochrome c-type biogenesis protein CcmE.